Here is a 283-residue protein sequence, read N- to C-terminus: N-terminal Xaa-Pro-Lys N-methyltransferase 2 (283 aa).

S-adenosyl-L-methionine contacts are provided by residues G124, R129, D146, 174–175 (LQ), and Q190.

Belongs to the methyltransferase superfamily. NTM1 family.

It is found in the nucleus. The enzyme catalyses N-terminal L-alanyl-L-prolyl-L-lysyl-[protein] + S-adenosyl-L-methionine = N-terminal N-methyl-L-alanyl-L-prolyl-L-lysyl-[protein] + S-adenosyl-L-homocysteine + H(+). It carries out the reaction N-terminal L-prolyl-L-prolyl-L-lysyl-[protein] + S-adenosyl-L-methionine = N-terminal N-methyl-L-prolyl-L-prolyl-L-lysyl-[protein] + S-adenosyl-L-homocysteine + H(+). The catalysed reaction is N-terminal L-seryl-L-prolyl-L-lysyl-[protein] + S-adenosyl-L-methionine = N-terminal N-methyl-L-seryl-L-prolyl-L-lysyl-[protein] + S-adenosyl-L-homocysteine + H(+). In terms of biological role, alpha N-methyltransferase that methylates the N-terminus of target proteins containing the N-terminal motif [Ala/Pro/Ser]-Pro-Lys when the initiator Met is cleaved. Specifically catalyzes monomethylation of exposed alpha-amino group of Ala or Ser residue in the [Ala/Ser]-Pro-Lys motif and Pro in the Pro-Pro-Lys motif. Predominantly functions as a mono-methyltransferase but is also able to di-/tri-methylate the GPKRIA peptide and di-methylate the PPKRIA peptide (in vitro). May activate NTMT1 by priming its substrates for trimethylation. The chain is N-terminal Xaa-Pro-Lys N-methyltransferase 2 (Ntmt2) from Rattus norvegicus (Rat).